The sequence spans 292 residues: HTH-type transcriptional activator IlvY (292 aa).

In terms of domain architecture, HTH lysR-type spans 1–58 (MEFTDLQIFIHLSDTKNFTKTATQNHMSPSTLSRQIQRLEDELGKTLFIRDNRQVKLT). A DNA-binding region (H-T-H motif) is located at residues 18-37 (FTKTATQNHMSPSTLSRQIQ).

Belongs to the LysR transcriptional regulatory family.

Its subcellular location is the cytoplasm. In terms of biological role, this protein activates the transcription of the ilvC gene in the presence of acetolactate or acetohydroxybutyrate. IlvY is also a negative regulator of its own expression. The protein is HTH-type transcriptional activator IlvY (ilvY) of Haemophilus influenzae (strain ATCC 51907 / DSM 11121 / KW20 / Rd).